The chain runs to 74 residues: Consomatin Gh1 (74 aa).

An N-terminal signal peptide occupies residues M1 to G22. Residues G23 to R57 constitute a propeptide that is removed on maturation. Residues C65 and C70 are joined by a disulfide bond. W67 bears the D-tryptophan mark. 3 positions are modified to 4-hydroxyproline: P71, P72, and P74.

The protein belongs to the conotoxin C superfamily. Consomatin family. As to expression, expressed by the venom duct.

It is found in the secreted. Functionally, moderately activates human somatostatin receptors (SSTR) with a preferential activation of SSTR1 and SSTR4. In vivo, does not cause behavioral changes in mice within a few minutes of intracranial injection, but causes a progressive loss of movement thereafter. Four to five hours after injection, mice recover, even with the highest dose tested. Shows antinociception and antihyperalgesia activities in two mouse models of acute pain, most probably by acting outside the central nervous system. The polypeptide is Consomatin Gh1 (Conus grahami (Cone snail)).